A 129-amino-acid polypeptide reads, in one-letter code: Serum amyloid A-1 protein (129 aa).

A signal peptide spans 1–18 (MKLFTGLIFCSLVLGVSS). An important for amyloid formation region spans residues 19–44 (QWYSFIGEAAQGAWDMYRAYSDMIEA). Residues 92 to 129 (GDSGHGVEDSKADQAANEWGRSGKDPNHFRPPGLPDKY) are disordered.

This sequence belongs to the SAA family. Homohexamer; dimer of trimers. Can form amyloid fibrils after partial proteolysis; the native, undenatured protein does not form amyloid fibrils (in vitro). Apolipoprotein of the HDL complex. Binds to heparin. Detected in liver.

It is found in the secreted. Functionally, major acute phase protein. The protein is Serum amyloid A-1 protein (SAA1) of Neovison vison (American mink).